The primary structure comprises 115 residues: NADH-ubiquinone oxidoreductase chain 3 (115 aa).

The next 3 membrane-spanning stretches (helical) occupy residues 4–24 (IVILFINATLSLGLITVAFWL), 55–75 (FFLIGITFLLFDLEITLLLPL), and 84–104 (TYFTMLVSFLLVSVLALGLMY).

This sequence belongs to the complex I subunit 3 family. Core subunit of respiratory chain NADH dehydrogenase (Complex I) which is composed of 45 different subunits. Interacts with TMEM186. Interacts with TMEM242.

It localises to the mitochondrion inner membrane. It carries out the reaction a ubiquinone + NADH + 5 H(+)(in) = a ubiquinol + NAD(+) + 4 H(+)(out). Its function is as follows. Core subunit of the mitochondrial membrane respiratory chain NADH dehydrogenase (Complex I) which catalyzes electron transfer from NADH through the respiratory chain, using ubiquinone as an electron acceptor. Essential for the catalytic activity of complex I. The protein is NADH-ubiquinone oxidoreductase chain 3 of Eligmodontia typus (Highland gerbil mouse).